Reading from the N-terminus, the 156-residue chain is Small ribosomal subunit protein uS7 (156 aa).

The protein belongs to the universal ribosomal protein uS7 family. As to quaternary structure, part of the 30S ribosomal subunit. Contacts proteins S9 and S11.

Its function is as follows. One of the primary rRNA binding proteins, it binds directly to 16S rRNA where it nucleates assembly of the head domain of the 30S subunit. Is located at the subunit interface close to the decoding center, probably blocks exit of the E-site tRNA. This chain is Small ribosomal subunit protein uS7, found in Rippkaea orientalis (strain PCC 8801 / RF-1) (Cyanothece sp. (strain PCC 8801)).